A 632-amino-acid polypeptide reads, in one-letter code: Glycerophosphodiester phosphodiesterase domain-containing protein 4 (632 aa).

Over 1–64 the chain is Cytoplasmic; that stretch reads MEETQDSSSS…GSCCCSRKEQ (64 aa). Residues 65-85 traverse the membrane as a helical segment; that stretch reads FFYMCLVIAFILSVLFLFVWV. Residues 86–114 lie on the Extracellular side of the membrane; it reads ETSNEYNGFDWVVYLGTGCWFFWSILVLS. Residues 115 to 135 form a helical membrane-spanning segment; it reads AAGIMVAYTTLLLLLGFLLLW. Residues 136 to 147 are Cytoplasmic-facing; the sequence is ERIELNLHTSHK. Residues 148-168 traverse the membrane as a helical segment; the sequence is VFICLVIVLCSFLLAVLSHFW. Residues 169 to 180 lie on the Extracellular side of the membrane; it reads KDKWLIAGLSLQ. Residues 181–201 traverse the membrane as a helical segment; sequence IFAPFVHLSLITVMIIISWPL. Over 202–240 the chain is Cytoplasmic; that stretch reads SICVARLESEVKVRRYRMADYEQEIQERCNVFQRLRALQ. A helical transmembrane segment spans residues 241–261; it reads IAAGLSFLIILLCLYLMPLGI. Over 262–542 the chain is Extracellular; that stretch reads YSPCILKKEN…SRPLFFMTPG (281 aa). The region spanning 276–533 is the GP-PDE domain; the sequence is PTLFGHRGAP…DNIELLNQLS (258 aa). A divalent metal cation contacts are provided by glutamate 308, aspartate 310, and histidine 323. Residues asparagine 343, asparagine 349, asparagine 384, and asparagine 473 are each glycosylated (N-linked (GlcNAc...) asparagine). A helical transmembrane segment spans residues 543–563; sequence FYMFMWLFLDIASAVIIGFVF. Residues 564-632 lie on the Cytoplasmic side of the membrane; that stretch reads CYNWIKEIKR…QKTEPKTENL (69 aa). The interval 596–632 is disordered; it reads ENNDASQQKPEVAPTSANLAPENMIELQKTEPKTENL. The span at 623–632 shows a compositional bias: basic and acidic residues; it reads QKTEPKTENL.

The protein belongs to the glycerophosphoryl diester phosphodiesterase family. In terms of tissue distribution, detected in testis, in particular in spermatocytes.

The protein localises to the cytoplasm. It is found in the membrane. In Mus musculus (Mouse), this protein is Glycerophosphodiester phosphodiesterase domain-containing protein 4 (Gdpd4).